Consider the following 176-residue polypeptide: Inorganic pyrophosphatase (176 aa).

Lys-30, Arg-44, and Tyr-56 together coordinate substrate. The Mg(2+) site is built by Asp-66, Asp-71, and Asp-103. Tyr-142 contacts substrate.

It belongs to the PPase family. As to quaternary structure, homohexamer. It depends on Mg(2+) as a cofactor.

It localises to the cytoplasm. The catalysed reaction is diphosphate + H2O = 2 phosphate + H(+). Functionally, catalyzes the hydrolysis of inorganic pyrophosphate (PPi) forming two phosphate ions. The sequence is that of Inorganic pyrophosphatase from Escherichia coli O157:H7.